The following is a 570-amino-acid chain: Glutamate--tRNA ligase, chloroplastic/mitochondrial (570 aa).

The N-terminal 39 residues, 1 to 39 (MASLVYGTPWLRVRSLPELAPAFLRRRQSSLFYCSRRSF), are a transit peptide targeting the chloroplast and mitochondrion. An L-glutamate-binding site is contributed by 57-59 (RFA). The short motif at 60 to 70 (PSPTGNLHVGG) is the 'HIGH' region element. Residue histidine 67 participates in ATP binding. Residues glutamate 93, 245 to 249 (YNFCV), and arginine 263 contribute to the L-glutamate site. ATP contacts are provided by residues glutamate 266 and 301 to 305 (KLSKR). A 'KMSKS' region motif is present at residues 301–305 (KLSKR).

The protein belongs to the class-I aminoacyl-tRNA synthetase family. Glutamate--tRNA ligase type 1 subfamily.

The protein resides in the plastid. It is found in the chloroplast. The protein localises to the mitochondrion. The enzyme catalyses tRNA(Glu) + L-glutamate + ATP = L-glutamyl-tRNA(Glu) + AMP + diphosphate. In terms of biological role, catalyzes the attachment of glutamate to tRNA(Glu) in a two-step reaction: glutamate is first activated by ATP to form Glu-AMP and then transferred to the acceptor end of tRNA(Glu). This chain is Glutamate--tRNA ligase, chloroplastic/mitochondrial, found in Arabidopsis thaliana (Mouse-ear cress).